We begin with the raw amino-acid sequence, 1283 residues long: Peroxisomal ATPase PEX1 (1283 aa).

The segment at 346–367 is disordered; sequence SKTKQNVLSPEKEKQMSEPLDQ. A Phosphoserine modification is found at Ser-354. Residues 355 to 367 show a composition bias toward basic and acidic residues; the sequence is PEKEKQMSEPLDQ. ATP is bound by residues 599–606 and 881–888; these read GGKGSGKS and GPPGTGKT. A phosphoserine mark is found at Ser-1181, Ser-1209, and Ser-1211. The disordered stretch occupies residues 1260–1283; the sequence is FQNPKRRKNQSGTMFRPGQKVTLA.

The protein belongs to the AAA ATPase family. Homooligomer; homooligomerizes in the cytosol, interaction with PEX6 promotes dissociation of the homooligomer. Interacts with PEX6; forming the PEX1-PEX6 AAA ATPase complex, which is composed of a heterohexamer formed by a trimer of PEX1-PEX6 dimers. Interacts indirectly with PEX26, via its interaction with PEX6.

The protein resides in the cytoplasm. Its subcellular location is the cytosol. The protein localises to the peroxisome membrane. It catalyses the reaction ATP + H2O = ADP + phosphate + H(+). Its function is as follows. Component of the PEX1-PEX6 AAA ATPase complex, a protein dislocase complex that mediates the ATP-dependent extraction of the PEX5 receptor from peroxisomal membranes, an essential step for PEX5 recycling. Specifically recognizes PEX5 monoubiquitinated at 'Cys-11', and pulls it out of the peroxisome lumen through the PEX2-PEX10-PEX12 retrotranslocation channel. Extraction by the PEX1-PEX6 AAA ATPase complex is accompanied by unfolding of the TPR repeats and release of bound cargo from PEX5. In Homo sapiens (Human), this protein is Peroxisomal ATPase PEX1.